A 744-amino-acid chain; its full sequence is Tripartite motif-containing protein 3 (744 aa).

Position 2 is an N-acetylalanine (Ala2). An interaction with KIF21B region spans residues Ala2–Pro290. The residue at position 7 (Ser7) is a Phosphoserine. An RING-type zinc finger spans residues Cys22 to Arg63. A B box-type zinc finger spans residues Gly110 to Leu151. Residues Cys115, His118, Cys138, and His143 each coordinate Zn(2+). Residues Asp153 to Glu224 are a coiled coil. The stretch at Thr317 to Ala418 is one Filamin repeat. The segment at Arg420–Lys462 is disordered. Ser427 carries the post-translational modification Phosphoserine. NHL repeat units lie at residues Val473–Glu516, Lys520–Glu563, Gly564–Asn605, Val609–Asp652, Leu656–Ser699, and Gly700–Leu743.

Belongs to the TRIM/RBCC family. Forms homooligomers. Interacts with TRIM2; this interaction reduces TRIM2 activity. Associates with myosin-Vb (MYO5B) and alpha-actinin-4 (ACTN4). Component of the CART complex, at least composed of ACTN4, HGS/HRS, MYO5B and TRIM3. Interacts with ZFYVE28/LST2. Interacts with KIF21B. Highly expressed in the brain, moderate levels in the lung, very low levels in the liver, kidney and heart. In the brain, expression was highest in the cerebellum. Expression in the brain is found at low levels at embryonic day 15 and then increases during the first two postnatal weeks before decreasing through adulthood.

Its subcellular location is the cytoplasm. It is found in the early endosome. The protein localises to the golgi apparatus. It localises to the trans-Golgi network. The protein resides in the cell projection. Its subcellular location is the dendrite. The catalysed reaction is S-ubiquitinyl-[E2 ubiquitin-conjugating enzyme]-L-cysteine + [acceptor protein]-L-lysine = [E2 ubiquitin-conjugating enzyme]-L-cysteine + N(6)-ubiquitinyl-[acceptor protein]-L-lysine.. Its function is as follows. E3 ubiquitin ligase that plays essential roles in neuronal functions such as regulation of neuronal plasticity, learning, and memory. In addition to its neuronal functions, participates in other biological processes such as innate immunity or cell cycle regulation. Component of the cytoskeleton-associated recycling or transport complex in neurons, polyubiquitinates gamma-actin, thus regulating neuronal plasticity, learning, and memory. Ubiquitinates postsynaptic scaffold GKAP, a neuronal substrate involved in synaptic remodeling and thereby modulates dendritic spine morphology. Positively regulates motility of microtubule-dependent motor protein KIF21B. Induces growth arrest via its RING-dependent E3 ligase activity and ubiquinates CDKN1A. Positively regulates TLR3-mediated signaling by mediating 'Lys-63'-linked polyubiquitination of TLR3. In turn, promotes the recognition and sorting of polyubiquitinated TLR3 by the ESCRT complexes. This Rattus norvegicus (Rat) protein is Tripartite motif-containing protein 3 (Trim3).